The sequence spans 358 residues: SPbeta prophage-derived probable integrase/recombinase YopP (358 aa).

Residues 23-114 (NKDIRSSSGN…SLKMLYTYLE (92 aa)) form the Core-binding (CB) domain. One can recognise a Tyr recombinase domain in the interval 137 to 319 (KNWDKTTQTE…NIANSAGVTM (183 aa)). Active-site residues include Arg178, Lys206, His268, and His295. Tyr304 (O-(3'-phospho-DNA)-tyrosine intermediate) is an active-site residue.

Belongs to the 'phage' integrase family.

Functionally, probable recombinase that does not seem to have a role in chromosome dimer resolution per se but rather may have some facilitative role during chromosome partitioning in general. This chain is SPbeta prophage-derived probable integrase/recombinase YopP (yopP), found in Bacillus subtilis (strain 168).